We begin with the raw amino-acid sequence, 950 residues long: Glycine dehydrogenase (decarboxylating) (950 aa).

Residue K698 is modified to N6-(pyridoxal phosphate)lysine.

The protein belongs to the GcvP family. As to quaternary structure, the glycine cleavage system is composed of four proteins: P, T, L and H. Pyridoxal 5'-phosphate serves as cofactor.

It carries out the reaction N(6)-[(R)-lipoyl]-L-lysyl-[glycine-cleavage complex H protein] + glycine + H(+) = N(6)-[(R)-S(8)-aminomethyldihydrolipoyl]-L-lysyl-[glycine-cleavage complex H protein] + CO2. Functionally, the glycine cleavage system catalyzes the degradation of glycine. The P protein binds the alpha-amino group of glycine through its pyridoxal phosphate cofactor; CO(2) is released and the remaining methylamine moiety is then transferred to the lipoamide cofactor of the H protein. The protein is Glycine dehydrogenase (decarboxylating) of Neisseria gonorrhoeae (strain NCCP11945).